The chain runs to 212 residues: Ras-related protein Rab-2A (212 aa).

Position 2 is an N-acetylalanine (A2). The interval 2–19 (AYAYLFKYIIIGDTGVGK) is required for interaction with PRKCI. 7 residues coordinate GTP: G16, V17, G18, K19, S20, C21, and T38. S20 lines the Mg(2+) pocket. A Switch 1 motif is present at residues 37–42 (LTIGVE). The Mg(2+) site is built by T38 and D61. A Switch 2 motif is present at residues 63-72 (AGQESFRSIT). GTP-binding residues include G64, N119, K120, D122, A150, and K151. The segment at 190–212 (QHAATNASHGSNQGGQQAGGGCC) is disordered. Over residues 201–212 (NQGGQQAGGGCC) the composition is skewed to gly residues. Residues C211 and C212 are each lipidated (S-geranylgeranyl cysteine).

The protein belongs to the small GTPase superfamily. Rab family. In terms of assembly, interacts with PRKCI. Interacts with TRIP11. Interacts (in GTP-bound form) with GARIN1B. Interacts (GTP-bound) with HOPS complex component VPS39; interaction contributes to obtaining a functional HOPS complex that promotes autophagosome-lysosome membrane fusion driven by STX17-SNAP29-VAMP8. Interacts with VPS41. Mg(2+) serves as cofactor. Post-translationally, prenylated. Prenylation is required for association with cellular membranes.

Its subcellular location is the endoplasmic reticulum-Golgi intermediate compartment membrane. It localises to the melanosome. The protein resides in the endoplasmic reticulum membrane. It is found in the golgi apparatus membrane. The protein localises to the cytoplasmic vesicle. Its subcellular location is the secretory vesicle. It localises to the acrosome. The protein resides in the autophagosome membrane. It carries out the reaction GTP + H2O = GDP + phosphate + H(+). With respect to regulation, regulated by guanine nucleotide exchange factors (GEFs) which promote the exchange of bound GDP for free GTP, GTPase activating proteins (GAPs) which increase the GTP hydrolysis activity, and GDP dissociation inhibitors (GDIs) which inhibit the dissociation of the nucleotide from the GTPase. Its function is as follows. The small GTPases Rab are key regulators of intracellular membrane trafficking, from the formation of transport vesicles to their fusion with membranes. Rabs cycle between active GTP-bound and inactive GDP-bound states. In their active state, drive transport of vesicular carriers from donor organelles to acceptor organelles to regulate the membrane traffic that maintains organelle identity and morphology. RAB2A regulates autophagy by promoting autophagosome-lysosome fusion via recruitment of the HOPS endosomal tethering complex; this process involves autophagosomal RAB2A and lysosomal RAB39A recruitment of HOPS subcomplexes VPS39-VPS11 and VPS41-VPS16-VPS18-VPS33A, respectively, which assemble into a functional complex to mediate membrane tethering and SNAREs-driven membrane fusion. Required for protein transport from the endoplasmic reticulum to the Golgi complex. Regulates the compacted morphology of the Golgi. Together with RAB2B, redundantly required for efficient autophagic flux. The polypeptide is Ras-related protein Rab-2A (Mus musculus (Mouse)).